We begin with the raw amino-acid sequence, 221 residues long: 7-cyano-7-deazaguanine synthase (221 aa).

Residue 7-17 (LSGGMDSTTLL) participates in ATP binding. 4 residues coordinate Zn(2+): Cys183, Cys191, Cys194, and Cys197.

It belongs to the QueC family. In terms of assembly, homodimer. The cofactor is Zn(2+).

It carries out the reaction 7-carboxy-7-deazaguanine + NH4(+) + ATP = 7-cyano-7-deazaguanine + ADP + phosphate + H2O + H(+). It functions in the pathway purine metabolism; 7-cyano-7-deazaguanine biosynthesis. Functionally, catalyzes the ATP-dependent conversion of 7-carboxy-7-deazaguanine (CDG) to 7-cyano-7-deazaguanine (preQ(0)). This chain is 7-cyano-7-deazaguanine synthase, found in Caldicellulosiruptor bescii (strain ATCC BAA-1888 / DSM 6725 / KCTC 15123 / Z-1320) (Anaerocellum thermophilum).